The following is a 791-amino-acid chain: Cytochrome c oxidase polypeptide I+III (791 aa).

Residues 1 to 473 (MAITAKPKAG…LLSTIGAYIL (473 aa)) form a COX1 region. The helical transmembrane segment at 29–49 (LMYTATAFFAFALAGVFSLLI) threads the bilayer. Residue histidine 73 coordinates Fe(II)-heme a. A run of 17 helical transmembrane segments spans residues 78–98 (LFFF…VPLM), 111–131 (AFSY…YFFP), 155–175 (FYLA…ANFV), 201–221 (ASVL…LVLL), 244–264 (FFWF…LGIL), 282–302 (MVWA…HHMF), 312–332 (IAFA…LFNI), 347–367 (LYWV…GVML), 381–401 (FVVA…AFAG), 423–443 (FWLF…LGYL), 464–484 (LLST…IYTM), 566–586 (FAFF…WVFL), 617–637 (AWMG…ILIA), 657–677 (LWLA…VHFA), 691–711 (FGLL…SWEF), 729–749 (FFTI…GLIL), and 771–791 (SMYW…FYVW). Residues histidine 250, tyrosine 254, histidine 299, and histidine 300 each contribute to the Cu cation site. The 1'-histidyl-3'-tyrosine (His-Tyr) cross-link spans 250–254 (HPTVY). Histidine 385 contacts heme a3. Histidine 387 provides a ligand contact to Fe(II)-heme a. The segment at 545 to 791 (DPAHIHLPNS…LVIVTIFYVW (247 aa)) is COX3.

It in the N-terminal section; belongs to the heme-copper respiratory oxidase family. This sequence in the C-terminal section; belongs to the cytochrome c oxidase subunit 3 family. As to quaternary structure, possibly a heterodimer of A-protein (contains: cytochrome c oxidase subunits I and III) and subunit II. The A-protein could also present a precursor form of subunits I and III. It depends on Cu(2+) as a cofactor. Heme serves as cofactor.

The protein resides in the cell membrane. The catalysed reaction is 4 Fe(II)-[cytochrome c] + O2 + 8 H(+)(in) = 4 Fe(III)-[cytochrome c] + 2 H2O + 4 H(+)(out). Its pathway is energy metabolism; oxidative phosphorylation. Cytochrome c oxidase is the component of the respiratory chain that catalyzes the reduction of oxygen to water. Subunits 1-3 form the functional core of the enzyme complex. Co I is the catalytic subunit of the enzyme. Electrons originating in cytochrome c are transferred via the copper A center of subunit 2 and heme a of subunit 1 to the bimetallic center formed by heme a3 and copper B. This cytochrome c oxidase shows proton pump activity across the membrane in addition to the electron transfer. The chain is Cytochrome c oxidase polypeptide I+III (caaA) from Thermus thermophilus (strain ATCC 27634 / DSM 579 / HB8).